Here is a 205-residue protein sequence, read N- to C-terminus: Dephospho-CoA kinase (205 aa).

The DPCK domain maps to 4 to 203 (KIGITGGIGS…QKIHYLCSAK (200 aa)). 12 to 17 (GSGKSV) serves as a coordination point for ATP.

The protein belongs to the CoaE family.

The protein resides in the cytoplasm. It carries out the reaction 3'-dephospho-CoA + ATP = ADP + CoA + H(+). The protein operates within cofactor biosynthesis; coenzyme A biosynthesis; CoA from (R)-pantothenate: step 5/5. Its function is as follows. Catalyzes the phosphorylation of the 3'-hydroxyl group of dephosphocoenzyme A to form coenzyme A. In Bacteroides fragilis (strain YCH46), this protein is Dephospho-CoA kinase.